Consider the following 416-residue polypeptide: Serine hydroxymethyltransferase (416 aa).

(6S)-5,6,7,8-tetrahydrofolate is bound by residues leucine 117 and glycine 121–leucine 123. N6-(pyridoxal phosphate)lysine is present on lysine 225. Serine 351–phenylalanine 353 is a (6S)-5,6,7,8-tetrahydrofolate binding site.

The protein belongs to the SHMT family. As to quaternary structure, homodimer. Requires pyridoxal 5'-phosphate as cofactor.

The protein localises to the cytoplasm. It catalyses the reaction (6R)-5,10-methylene-5,6,7,8-tetrahydrofolate + glycine + H2O = (6S)-5,6,7,8-tetrahydrofolate + L-serine. The protein operates within one-carbon metabolism; tetrahydrofolate interconversion. It participates in amino-acid biosynthesis; glycine biosynthesis; glycine from L-serine: step 1/1. Its function is as follows. Catalyzes the reversible interconversion of serine and glycine with tetrahydrofolate (THF) serving as the one-carbon carrier. This reaction serves as the major source of one-carbon groups required for the biosynthesis of purines, thymidylate, methionine, and other important biomolecules. Also exhibits THF-independent aldolase activity toward beta-hydroxyamino acids, producing glycine and aldehydes, via a retro-aldol mechanism. The polypeptide is Serine hydroxymethyltransferase (Blochmanniella pennsylvanica (strain BPEN)).